The primary structure comprises 274 residues: Shikimate dehydrogenase (NADP(+)) (274 aa).

Residues serine 14–serine 16 and threonine 60 contribute to the shikimate site. The Proton acceptor role is filled by lysine 64. Glutamate 76 provides a ligand contact to NADP(+). The shikimate site is built by asparagine 85 and aspartate 101. NADP(+) is bound by residues glycine 126 to alanine 130, asparagine 150 to lysine 155, and methionine 214. Residue tyrosine 216 participates in shikimate binding. Glycine 238 contributes to the NADP(+) binding site.

It belongs to the shikimate dehydrogenase family. As to quaternary structure, homodimer.

It carries out the reaction shikimate + NADP(+) = 3-dehydroshikimate + NADPH + H(+). It functions in the pathway metabolic intermediate biosynthesis; chorismate biosynthesis; chorismate from D-erythrose 4-phosphate and phosphoenolpyruvate: step 4/7. Involved in the biosynthesis of the chorismate, which leads to the biosynthesis of aromatic amino acids. Catalyzes the reversible NADPH linked reduction of 3-dehydroshikimate (DHSA) to yield shikimate (SA). This Pseudomonas aeruginosa (strain ATCC 15692 / DSM 22644 / CIP 104116 / JCM 14847 / LMG 12228 / 1C / PRS 101 / PAO1) protein is Shikimate dehydrogenase (NADP(+)).